The sequence spans 1019 residues: MSFSPRGPSRPVLRRRRRGAALPTVVILVAVVIAVVVGARITADVWWFDQLGFLPTFTTKLWLQVLLFTLGALLLAAAVAVSLTLGYRARPIYAPVSDEQAGLDRYRESLEPLRRLVVVVLSAAAGLFGGSVAMSRWETLLLWWNRVDFGTRDEQFRMDQGFYVFTLPWLAFLVSFLTAAVVLAGIAGLAAHYLYGGLRLSGAGPRTTRAARVHLASLAAAFLLLRAAGYWLDRYELMTTSSGYVRGVVGPTYTDVHAVLPSKAILALIAVVVALLFVAAAVGTSWRLPAIGTGLLVVSAIAIGGIYPWAVQRFQVTPNRQSLESEYVGKNIDATRDAYDLSDVEVSTYAADTTASQGQLSEDAQTIPSVRLLDPSVVSQAFQQTQGQRGYYKFGETLDVDRYATPDGGTQDAVVAARELNLAGLADNQRTWVNEHTIYTHGYGVVVAQGNDRAPDGSPSYVEANVPTSGDLDLEQPRIYFGEGTTTYSIVGGRDNEIDYPDGSAGGFATTEYDGSGGVAVGSLLQKLVYGLKFGDQNILLSGSVTPESRILYDRTPRERVEKVAPWLTMDGDAYPSIVDGRVVWILDGYTTSNSYPYSAATELGDATTDALTQTQGSSVQALQDRTVNYVRNSVKATVDAYTGKVDLYAWDDTDPVLKAWMKAFPGAVEPLSAIDGSLMQHLRYPQDMFKVQREVLTRYHVTDPASFLTGQDFWDVPGDPTVDAAAGTVRPSQPPYYLTLRMPEQDTPTYSLTTTYVPASNANASGTQVLRGFAAVDSDAGSTKGTKSEGYGTIRLLELPQSTTVNGPVQIQNNIRSDTAVADQVRLLSVGDNSRVIYGNLLTLPVGGGLLYVEPIYAQSTGDNSFPRLSRVVAVFGDNIAIANTLDEALDEVFGGNSGAGAGDEGAPPPTAGTPAPTDGATGGPAPDPATGDAQVQLQQALDNAKRAIQDSSAALAEGDFTKYGEAQQRLRAAVDAASAAEARLERSGTSGPTSSSSPSASSAPPVPGETPAATPTP.

A run of 7 helical transmembrane segments spans residues 19-39 (GAAL…VVGA), 61-81 (LWLQ…AVAV), 115-135 (RLVV…VAMS), 169-189 (WLAF…IAGL), 213-233 (VHLA…YWLD), 264-284 (AILA…AVGT), and 291-311 (IGTG…PWAV). 2 disordered regions span residues 897-934 (GNSG…ATGD) and 977-1019 (DAAS…TPTP). Residues 977–1005 (DAASAAEARLERSGTSGPTSSSSPSASSA) show a composition bias toward low complexity. The span at 1006-1019 (PPVPGETPAATPTP) shows a compositional bias: pro residues.

The protein belongs to the UPF0182 family.

Its subcellular location is the cell membrane. The sequence is that of UPF0182 protein Krad_1193 from Kineococcus radiotolerans (strain ATCC BAA-149 / DSM 14245 / SRS30216).